Reading from the N-terminus, the 133-residue chain is uncharacterized protein (133 aa).

This is an uncharacterized protein from Saccharomyces cerevisiae (strain ATCC 204508 / S288c) (Baker's yeast).